The chain runs to 115 residues: MSNSQVIEKLLAKAKRTDLPSFAPGDTVRVHVKIKEGDKERLQAFEGVVIGKSNGLQPSFTVRKISFGQGVERIFPTNSKVIDKIEVLRSAKVRRAKLYYLRALRGKAARLKEAE.

Belongs to the bacterial ribosomal protein bL19 family.

In terms of biological role, this protein is located at the 30S-50S ribosomal subunit interface and may play a role in the structure and function of the aminoacyl-tRNA binding site. This Koribacter versatilis (strain Ellin345) protein is Large ribosomal subunit protein bL19.